The following is a 25-amino-acid chain: XAITAEPVGTPETLEYRVFIQKDGK.

In terms of assembly, monomer. Mg(2+) serves as cofactor.

The enzyme catalyses diphosphate + H2O = 2 phosphate + H(+). The protein is Inorganic pyrophosphatase of Cyanophora paradoxa.